The sequence spans 406 residues: Olfactomedin-like protein 3 (406 aa).

A signal peptide spans 1–21 (MGPSAPLLLLFFLSWTGPLQG). The stretch at 25 to 101 (HLVEYMERRL…REVDYLETQN (77 aa)) forms a coiled coil. The Olfactomedin-like domain occupies 134–401 (DCSYTVAQVR…QIVYKLEMKK (268 aa)). Residues cysteine 135 and cysteine 328 are joined by a disulfide bond. 2 N-linked (GlcNAc...) asparagine glycosylation sites follow: asparagine 177 and asparagine 248.

It belongs to the OLFML3 family.

The protein localises to the secreted. In terms of biological role, secreted scaffold protein that plays an essential role in dorsoventral patterning during early development. Stabilizes axial formation by restricting chordin (CHRD) activity on the dorsal side. Acts by facilitating the association between the tolloid proteases and their substrate chordin (CHRD), leading to enhance chordin (CHRD) degradation. May have matrix-related function involved in placental and embryonic development, or play a similar role in other physiological processes. This Mus musculus (Mouse) protein is Olfactomedin-like protein 3 (Olfml3).